A 545-amino-acid polypeptide reads, in one-letter code: Chaperonin GroEL (545 aa).

Residues 30-33 (TLGP), Lys-51, 87-91 (DGTTT), Gly-415, 479-481 (NAA), and Asp-495 contribute to the ATP site.

This sequence belongs to the chaperonin (HSP60) family. As to quaternary structure, forms a cylinder of 14 subunits composed of two heptameric rings stacked back-to-back. Interacts with the co-chaperonin GroES.

It localises to the cytoplasm. The enzyme catalyses ATP + H2O + a folded polypeptide = ADP + phosphate + an unfolded polypeptide.. Functionally, together with its co-chaperonin GroES, plays an essential role in assisting protein folding. The GroEL-GroES system forms a nano-cage that allows encapsulation of the non-native substrate proteins and provides a physical environment optimized to promote and accelerate protein folding. This is Chaperonin GroEL from Salmonella agona (strain SL483).